We begin with the raw amino-acid sequence, 383 residues long: L-lactate dehydrogenase (383 aa).

In terms of domain architecture, FMN hydroxy acid dehydrogenase spans Met-1–Lys-380. Tyr-24 provides a ligand contact to substrate. FMN contacts are provided by Ser-106 and Gln-127. Position 129 (Tyr-129) interacts with substrate. An FMN-binding site is contributed by Thr-155. Arg-164 contributes to the substrate binding site. Lys-251 serves as a coordination point for FMN. The active-site Proton acceptor is His-275. Residue Arg-278 coordinates substrate. FMN is bound at residue Asp-306–Arg-330.

It belongs to the FMN-dependent alpha-hydroxy acid dehydrogenase family. The cofactor is FMN.

It is found in the cell inner membrane. It carries out the reaction (S)-lactate + A = pyruvate + AH2. Functionally, catalyzes the conversion of L-lactate to pyruvate. Is coupled to the respiratory chain. The chain is L-lactate dehydrogenase from Acinetobacter baumannii (strain AB307-0294).